We begin with the raw amino-acid sequence, 457 residues long: Putative purine-cytosine permease YxlA (457 aa).

12 helical membrane-spanning segments follow: residues 24 to 44, 50 to 70, 90 to 110, 127 to 147, 164 to 184, 192 to 212, 228 to 248, 264 to 284, 316 to 336, 341 to 361, 392 to 412, and 420 to 440; these read FPVW…TIPV, LFWS…FMAS, FGVI…LGFF, IPGS…TIFG, AVFF…GSWI, IFLV…PYVA, FWYS…LGAL, IVQL…FGQM, IIMI…GQSN, FLNF…INLV, IAFV…FYIG, and GGDI…YVLM.

The protein belongs to the purine-cytosine permease (2.A.39) family.

The protein localises to the cell membrane. This is Putative purine-cytosine permease YxlA (yxlA) from Bacillus subtilis (strain 168).